The primary structure comprises 430 residues: MTTLTLNTSLLSSRRILAAFSGGLDSTVLLHQLVLWRERHPDVTLRAIHIHHGLSPHADSWVRHCETVCERWQVPLVVERVTLADNGLGIEAHAREARYRAFAQTLLPGEVLATAQHLDDQCETFLLALKRGSGPAGLSAMGERSPFAGTLLLRPLLRETRKTLEQWAVRHGLCWIEDESNQDDAYDRNFLRLRALPLLQQRWPHFPAAVARSATLCAEQERLLDELLASDLTDCITTEGTLRLSPLMSMSDVRRAAILRRWLAMRNAPMPSRDALERIWQEVALARDDASPCLRFGDHEIRRYQSQLWWIKTVAGQHETTVAWPVWQTPLALPAGLGTVQLVPGGELRRPREEESVSIRFKAPGLLHIVGRHGGRKLKKIWQEQGIPPWRRDTTPLLFYGETLIAAAGVFVTREGAAEDKEGVSLVWHA.

Residue 21-26 (SGGLDS) coordinates ATP.

The protein belongs to the tRNA(Ile)-lysidine synthase family.

Its subcellular location is the cytoplasm. The catalysed reaction is cytidine(34) in tRNA(Ile2) + L-lysine + ATP = lysidine(34) in tRNA(Ile2) + AMP + diphosphate + H(+). In terms of biological role, ligates lysine onto the cytidine present at position 34 of the AUA codon-specific tRNA(Ile) that contains the anticodon CAU, in an ATP-dependent manner. Cytidine is converted to lysidine, thus changing the amino acid specificity of the tRNA from methionine to isoleucine. In Salmonella typhi, this protein is tRNA(Ile)-lysidine synthase.